Here is a 147-residue protein sequence, read N- to C-terminus: Pathogenesis-related protein PR-4B (147 aa).

The N-terminal stretch at 1–25 is a signal peptide; that stretch reads MERVNNYKLCVALLIMSVMMAMAAA. The 122-residue stretch at 26-147 folds into the Barwin domain; sequence QSATNVRSTY…VNYEFVNCND (122 aa). Disulfide bonds link C54–C86, C75–C109, and C89–C145.

Its subcellular location is the secreted. The protein localises to the cell wall. This chain is Pathogenesis-related protein PR-4B, found in Nicotiana tabacum (Common tobacco).